The following is a 459-amino-acid chain: Argininosuccinate lyase (459 aa).

Belongs to the lyase 1 family. Argininosuccinate lyase subfamily.

Its subcellular location is the cytoplasm. It catalyses the reaction 2-(N(omega)-L-arginino)succinate = fumarate + L-arginine. Its pathway is amino-acid biosynthesis; L-arginine biosynthesis; L-arginine from L-ornithine and carbamoyl phosphate: step 3/3. The polypeptide is Argininosuccinate lyase (Ruminiclostridium cellulolyticum (strain ATCC 35319 / DSM 5812 / JCM 6584 / H10) (Clostridium cellulolyticum)).